A 691-amino-acid chain; its full sequence is Elongation factor G (691 aa).

In terms of domain architecture, tr-type G spans 8–282; sequence HMVRNIGIAA…AVVDYLPAPD (275 aa). Residues 17 to 24, 81 to 85, and 135 to 138 contribute to the GTP site; these read AHIDAGKT, DTPGH, and NKMD.

It belongs to the TRAFAC class translation factor GTPase superfamily. Classic translation factor GTPase family. EF-G/EF-2 subfamily.

The protein resides in the cytoplasm. In terms of biological role, catalyzes the GTP-dependent ribosomal translocation step during translation elongation. During this step, the ribosome changes from the pre-translocational (PRE) to the post-translocational (POST) state as the newly formed A-site-bound peptidyl-tRNA and P-site-bound deacylated tRNA move to the P and E sites, respectively. Catalyzes the coordinated movement of the two tRNA molecules, the mRNA and conformational changes in the ribosome. The polypeptide is Elongation factor G (Campylobacter hominis (strain ATCC BAA-381 / DSM 21671 / CCUG 45161 / LMG 19568 / NCTC 13146 / CH001A)).